Reading from the N-terminus, the 479-residue chain is MIQVLLVTICLAVFPYQGSSIILESGNVNDYEVVYPRKVTALPNRAVQPKYEDAMQYEFKVNGEPVVLHLEKNKGLFSKDYSETYYSPDGRKITTKPPVEDHCYYHGRIQNDADSTASISACNGLKGHFKLQGETHLIEPLKLSGSEAHAVFKYENVEKEDEAPKMCGVTETNWESYEPIKKASKLVVTAEPLRYVELVIVADHGMVTKYNGDLDKIREWVHEMVNTVDEIYDYMYIDVILADLEIWTNEDLINVQPSAHHTLDSFGEWRERDLLKRKSHDNAQLLTATDFDGPTIGLAHVASMCDPKRSTGVVQDHSTINLRVAVTLAHEMGHNLGIHHDKGSCSCGGYACIMSPVISHDPSKYFSNCSYIQCWDFIRKHNPQCILNKPLRTDTVSTPVSGNELLEAGEDCDCGSPSNPCCDVGTCKLSPGAQCADGLCCDQCRFKKKGTICRIARGDWNDDRCTGQSADCPRNGLYG.

The N-terminal stretch at 1 to 20 is a signal peptide; it reads MIQVLLVTICLAVFPYQGSS. Positions 21–188 are excised as a propeptide; it reads IILESGNVND…PIKKASKLVV (168 aa). Residues 194-390 enclose the Peptidase M12B domain; it reads RYVELVIVAD…HNPQCILNKP (197 aa). 3 disulfides stabilise this stretch: C305–C385, C345–C369, and C347–C352. Position 330 (H330) interacts with Zn(2+). Residue E331 is part of the active site. Zn(2+) is bound by residues H334 and H339. N-linked (GlcNAc...) asparagine glycosylation is present at N368. Positions 391–408 are excised as a propeptide; that stretch reads LRTDTVSTPVSGNELLEA. The 82-residue stretch at 398–479 folds into the Disintegrin domain; it reads TPVSGNELLE…ADCPRNGLYG (82 aa). 6 cysteine pairs are disulfide-bonded: C412/C427, C414/C422, C421/C444, C435/C441, C440/C465, and C453/C472. A Cell attachment site motif is present at residues 457–459; it reads RGD.

The protein belongs to the venom metalloproteinase (M12B) family. P-II subfamily. P-IIa sub-subfamily. As to quaternary structure, monomer. Requires Zn(2+) as cofactor. As to expression, expressed by the venom gland.

It localises to the secreted. Functionally, impairs hemostasis in the envenomed animal. Inhibits platelet aggregation. The sequence is that of Zinc metalloproteinase/disintegrin PMMP-1 from Protobothrops mucrosquamatus (Taiwan habu).